The primary structure comprises 269 residues: Tryptophan synthase alpha chain (269 aa).

Active-site proton acceptor residues include Glu56 and Asp67.

This sequence belongs to the TrpA family. In terms of assembly, tetramer of two alpha and two beta chains.

The enzyme catalyses (1S,2R)-1-C-(indol-3-yl)glycerol 3-phosphate + L-serine = D-glyceraldehyde 3-phosphate + L-tryptophan + H2O. It participates in amino-acid biosynthesis; L-tryptophan biosynthesis; L-tryptophan from chorismate: step 5/5. The alpha subunit is responsible for the aldol cleavage of indoleglycerol phosphate to indole and glyceraldehyde 3-phosphate. This Mycobacterium marinum (strain ATCC BAA-535 / M) protein is Tryptophan synthase alpha chain.